The primary structure comprises 257 residues: Neuroendocrine secretory protein 55 (257 aa).

The first 46 residues, 1-46, serve as a signal peptide directing secretion; sequence MDRRSRAQQWRRARHNYNDLCPPIGRRAATALLWLSCSIALLRALA. The tract at residues 61–257 is disordered; sequence SFLNAHHRSA…RKGPIPIRRH (197 aa). Positions 70 to 82 are enriched in low complexity; that stretch reads AAAAAAAQVLPES. Residues 86-103 are compositionally biased toward basic and acidic residues; that stretch reads ESDHEHEEVEPELARPEC. Over residues 104–139 the composition is skewed to acidic residues; that stretch reads LEYDQDDYETETDSETEPESDIESETEIETEPETEP. Residues 200–211 show a composition bias toward basic and acidic residues; it reads EPQRGPLDQDPR. Over residues 227 to 237 the composition is skewed to basic residues; the sequence is PRRCKTRRPAR.

This sequence belongs to the NESP55 family. In terms of processing, binds keratan sulfate chains. May be proteolytically processed to give rise to a number of active peptides.

It localises to the cytoplasmic vesicle. The protein resides in the secretory vesicle. Its subcellular location is the secreted. In Mus musculus (Mouse), this protein is Neuroendocrine secretory protein 55.